Consider the following 308-residue polypeptide: Aspartate carbamoyltransferase catalytic subunit (308 aa).

Positions 57 and 58 each coordinate carbamoyl phosphate. Position 86 (Lys86) interacts with L-aspartate. The carbamoyl phosphate site is built by Arg107, His135, and Gln138. Residues Arg167 and Arg228 each coordinate L-aspartate. The carbamoyl phosphate site is built by Leu267 and Pro268.

This sequence belongs to the aspartate/ornithine carbamoyltransferase superfamily. ATCase family. Heterooligomer of catalytic and regulatory chains.

It carries out the reaction carbamoyl phosphate + L-aspartate = N-carbamoyl-L-aspartate + phosphate + H(+). It participates in pyrimidine metabolism; UMP biosynthesis via de novo pathway; (S)-dihydroorotate from bicarbonate: step 2/3. Its function is as follows. Catalyzes the condensation of carbamoyl phosphate and aspartate to form carbamoyl aspartate and inorganic phosphate, the committed step in the de novo pyrimidine nucleotide biosynthesis pathway. The protein is Aspartate carbamoyltransferase catalytic subunit of Methanosarcina acetivorans (strain ATCC 35395 / DSM 2834 / JCM 12185 / C2A).